The following is a 764-amino-acid chain: Nucleolar complex-associated protein 2 (764 aa).

The stretch at 3 to 69 (AKDDKKRVKK…EEELKRLQEK (67 aa)) forms a coiled coil. Disordered stretches follow at residues 23–67 (ELNN…KRLQ), 89–113 (ATEI…EGDD), 627–646 (AVFG…DRME), and 651–726 (AFNS…EDDA). A compositionally biased stretch (basic and acidic residues) spans 30–41 (IDAHDIVMEQKS). The segment covering 42-51 (DKKRGKKVKS) has biased composition (basic residues). Over residues 52 to 67 (KKAEAEEHEEELKRLQ) the composition is skewed to basic and acidic residues. Positions 90–113 (TEIEDDADVEPDTDLEDTEKEGDD) are enriched in acidic residues. Over residues 661–672 (DSKEKEPEEEKT) the composition is skewed to basic and acidic residues. A Nuclear localization signal 1 motif is present at residues 673–680 (KKKKRKRG). Over residues 673 to 682 (KKKKRKRGGK) the composition is skewed to basic residues. The span at 693–726 (GLGEDDVVEDFVLSSDEEEEDLFDIGGDKDEDDA) shows a compositional bias: acidic residues. The Nuclear localization signal 2 motif lies at 738–745 (SKKTKGTY).

It belongs to the NOC2 family. Component of nucleolar complexes. Forms homodimers. Interacts with RBL and NOC3 in both the nucleolus and nucleoplasm. Binds to SWA2.

It is found in the nucleus. Its subcellular location is the nucleolus. The protein localises to the nucleoplasm. Functionally, together with SWA2, probably involved in pre-ribosome export from the nucleus to the cytoplasm. The chain is Nucleolar complex-associated protein 2 from Arabidopsis thaliana (Mouse-ear cress).